The sequence spans 267 residues: Type II pantothenate kinase (267 aa).

ATP is bound at residue 6–13 (DAGGTLIK). Residue Glu70 is the Proton acceptor of the active site. ATP contacts are provided by residues Thr99, 121 to 125 (GGMIQ), Tyr137, and Ser225.

It belongs to the type II pantothenate kinase family. In terms of assembly, homodimer.

It is found in the cytoplasm. It catalyses the reaction (R)-pantothenate + ATP = (R)-4'-phosphopantothenate + ADP + H(+). The protein operates within cofactor biosynthesis; coenzyme A biosynthesis; CoA from (R)-pantothenate: step 1/5. Functionally, catalyzes the phosphorylation of pantothenate (Pan), the first step in CoA biosynthesis. This is Type II pantothenate kinase from Staphylococcus aureus (strain bovine RF122 / ET3-1).